The chain runs to 126 residues: Large ribosomal subunit protein mL52 (126 aa).

The N-terminal 28 residues, 1 to 28 (MLKITKICLASSATSTAQRSIALTAPRA), are a transit peptide targeting the mitochondrion.

This sequence belongs to the mitochondrion-specific ribosomal protein mL52 family. As to quaternary structure, component of the mitochondrial ribosome large subunit (39S) which comprises a 16S rRNA and about 50 distinct proteins.

The protein resides in the mitochondrion. The protein is Large ribosomal subunit protein mL52 (mRpL52) of Drosophila melanogaster (Fruit fly).